We begin with the raw amino-acid sequence, 307 residues long: ATP-dependent (S)-NAD(P)H-hydrate dehydratase (307 aa).

Positions 1–291 (MDHFIKLLPK…DEIPKLVRDV (291 aa)) constitute a YjeF C-terminal domain. (6S)-NADPHX contacts are provided by residues Gly96 and 150 to 156 (NIVEFSR). ATP-binding positions include 194-198 (KGEVD) and 214-223 (SSLRRCGGQG). Asp224 lines the (6S)-NADPHX pocket.

Belongs to the NnrD/CARKD family. Requires Mg(2+) as cofactor.

The catalysed reaction is (6S)-NADHX + ATP = ADP + phosphate + NADH + H(+). It catalyses the reaction (6S)-NADPHX + ATP = ADP + phosphate + NADPH + H(+). In terms of biological role, catalyzes the dehydration of the S-form of NAD(P)HX at the expense of ATP, which is converted to ADP. Together with NAD(P)HX epimerase, which catalyzes the epimerization of the S- and R-forms, the enzyme allows the repair of both epimers of NAD(P)HX, a damaged form of NAD(P)H that is a result of enzymatic or heat-dependent hydration. The protein is ATP-dependent (S)-NAD(P)H-hydrate dehydratase of Caenorhabditis elegans.